A 140-amino-acid polypeptide reads, in one-letter code: ATP synthase epsilon chain (140 aa).

It belongs to the ATPase epsilon chain family. F-type ATPases have 2 components, CF(1) - the catalytic core - and CF(0) - the membrane proton channel. CF(1) has five subunits: alpha(3), beta(3), gamma(1), delta(1), epsilon(1). CF(0) has three main subunits: a, b and c.

It is found in the cell inner membrane. Produces ATP from ADP in the presence of a proton gradient across the membrane. The sequence is that of ATP synthase epsilon chain from Saccharophagus degradans (strain 2-40 / ATCC 43961 / DSM 17024).